We begin with the raw amino-acid sequence, 404 residues long: MSLCTLEINLSAIKNNYRLLQDICKTALVGAVVKANGYGLGAMQIAKALIKENCQYFFVATSEEGINLRKVLNNDITILVLNGVFTHDALELIQYNLTPVLNNLSQIEIWQKFSNLKGKILPCYLHFNTGLNRFGLNSDEIEQLINDRDLLKGLDLQYIISHLAASEETGNPYNLIQLNRFKVYLEYFPNVKASFANSGGIFLGQDYHFDLARPGAALYGLNSLIEVSSNLSYTEEFESNTAALTTTACINKCPDVSVRLTPKLPLKGSYTVRLQNPVTLKAPIIDLQNLTLDSHIGYNMTFTTKRDSVIATLPLGYADGFSRNFSSQGEVFINSCSVPIVGRVSMDLINIDVTDLPPSEVFLGQEAEIIGNYCTPDKIASIIGTIGYEVLTSLGSRYKRKYIS.

Lysine 34 acts as the Proton acceptor; specific for D-alanine in catalysis. Residue lysine 34 is modified to N6-(pyridoxal phosphate)lysine. Residue arginine 133 coordinates substrate. An RPE1 insert domain is found at 226-273; that stretch reads EVSSNLSYTEEFESNTAALTTTACINKCPDVSVRLTPKLPLKGSYTVR. Tyrosine 298 acts as the Proton acceptor; specific for L-alanine in catalysis. Methionine 346 serves as a coordination point for substrate.

It belongs to the alanine racemase family. Pyridoxal 5'-phosphate is required as a cofactor.

It catalyses the reaction L-alanine = D-alanine. It participates in amino-acid biosynthesis; D-alanine biosynthesis; D-alanine from L-alanine: step 1/1. In terms of biological role, catalyzes the interconversion of L-alanine and D-alanine. May also act on other amino acids. This Rickettsia prowazekii (strain Madrid E) protein is Alanine racemase (alr).